The following is a 220-amino-acid chain: Dual specificity protein phosphatase 19 (220 aa).

Position 1 is an N-acetylmethionine (Met-1). Positions 64-205 (QVGVIKPWLL…LRTYQVGKES (142 aa)) constitute a Tyrosine-protein phosphatase domain. Cys-149 acts as the Phosphocysteine intermediate in catalysis.

It belongs to the protein-tyrosine phosphatase family. Non-receptor class dual specificity subfamily.

It catalyses the reaction O-phospho-L-tyrosyl-[protein] + H2O = L-tyrosyl-[protein] + phosphate. The catalysed reaction is O-phospho-L-seryl-[protein] + H2O = L-seryl-[protein] + phosphate. The enzyme catalyses O-phospho-L-threonyl-[protein] + H2O = L-threonyl-[protein] + phosphate. Phosphatase activity is enhanced by Ca(2+) and Mn(2+). Its function is as follows. Has a dual specificity toward Ser/Thr and Tyr-containing proteins. The chain is Dual specificity protein phosphatase 19 from Mus musculus (Mouse).